Consider the following 304-residue polypeptide: KIN17-like protein (304 aa).

Residues 26–50 form a C2H2-type zinc finger; it reads WYCSACQKQMRDENGFKCHTQSEGH. Disordered regions lie at residues 204 to 228 and 261 to 291; these read IDLS…SAQN and LNKS…DIIA.

It belongs to the KIN17 family.

The protein resides in the nucleus. It is found in the nucleolus. The chain is KIN17-like protein from Schizosaccharomyces pombe (strain 972 / ATCC 24843) (Fission yeast).